The chain runs to 153 residues: Probable ubiquitin-conjugating enzyme E2 C (153 aa).

The UBC core domain occupies 6–153 (SVSKRLQSEL…KRYQEATSRP (148 aa)). The Glycyl thioester intermediate role is filled by Cys90.

This sequence belongs to the ubiquitin-conjugating enzyme family. As to quaternary structure, component of the APC/C complex. In terms of processing, autoubiquitinated by the APC/C complex, leading to its degradation by the proteasome.

The enzyme catalyses S-ubiquitinyl-[E1 ubiquitin-activating enzyme]-L-cysteine + [E2 ubiquitin-conjugating enzyme]-L-cysteine = [E1 ubiquitin-activating enzyme]-L-cysteine + S-ubiquitinyl-[E2 ubiquitin-conjugating enzyme]-L-cysteine.. Its pathway is protein modification; protein ubiquitination. In terms of biological role, catalyzes the covalent attachment of ubiquitin to other proteins. Acts as an essential factor of the anaphase promoting complex/cyclosome (APC/C), a cell cycle-regulated ubiquitin ligase that controls progression through mitosis. Acts by initiating polyubiquitin chains on APC/C substrates, leading to the degradation of APC/C substrates by the proteasome and promoting mitotic exit. This chain is Probable ubiquitin-conjugating enzyme E2 C (ube2c), found in Dictyostelium discoideum (Social amoeba).